We begin with the raw amino-acid sequence, 85 residues long: HssA/B-like protein 59 (85 aa).

The protein belongs to the hssA/B family.

This Dictyostelium discoideum (Social amoeba) protein is HssA/B-like protein 59 (hssl59).